The chain runs to 859 residues: Protein SEY1 (859 aa).

Topologically, residues 1 to 742 are cytoplasmic; the sequence is MMMNSHFAGV…KRSAIGGITQ (742 aa). The GB1/RHD3-type G domain maps to 49–291; it reads GFNYHLISVF…FQPQYHRRIP (243 aa). 59-66 lines the GTP pocket; the sequence is GSQSTGKS. Residues 476 to 496 are a coiled coil; the sequence is FEHELKVYRKDLDDVSGRLRK. The interval 525–544 is disordered; the sequence is LGTGRGGSGAPEHGERPPSE. Residues 743 to 763 traverse the membrane as a helical segment; it reads VPLYFYGLLVALGWNEIVAVL. Over 764–766 the chain is Lumenal; sequence RNP. The helical transmembrane segment at 767-787 threads the bilayer; sequence VYFIFLILCAVGAYVTYTLNL. Topologically, residues 788-859 are cytoplasmic; that stretch reads WGPMIRMGNA…DAEVEDLDDI (72 aa). The disordered stretch occupies residues 816 to 859; it reads SSESGRQAMAMSGNQPRGESVRMNRLNGNGKKDEDAEVEDLDDI. Residues 850–859 show a composition bias toward acidic residues; the sequence is DAEVEDLDDI.

The protein belongs to the TRAFAC class dynamin-like GTPase superfamily. GB1/RHD3 GTPase family. RHD3 subfamily.

It localises to the endoplasmic reticulum membrane. Cooperates with the reticulon proteins and tubule-shaping DP1 family proteins to generate and maintain the structure of the tubular endoplasmic reticulum network. Has GTPase activity, which is required for its function in ER organization. This chain is Protein SEY1, found in Phaeosphaeria nodorum (strain SN15 / ATCC MYA-4574 / FGSC 10173) (Glume blotch fungus).